The primary structure comprises 309 residues: uncharacterized protein (309 aa).

Positions 1–16 (MAGNSRRRGAVRKAGT) are enriched in basic residues. The disordered stretch occupies residues 1-70 (MAGNSRRRGA…AKRTEETETV (70 aa)). Gly-261, Ile-281, and Leu-290 together coordinate S-adenosyl-L-methionine.

The protein belongs to the class IV-like SAM-binding methyltransferase superfamily. RNA methyltransferase TrmH family.

This is an uncharacterized protein from Mycolicibacterium paratuberculosis (strain ATCC BAA-968 / K-10) (Mycobacterium paratuberculosis).